A 186-amino-acid chain; its full sequence is Elongation factor P (186 aa).

The protein belongs to the elongation factor P family.

Its subcellular location is the cytoplasm. It functions in the pathway protein biosynthesis; polypeptide chain elongation. Involved in peptide bond synthesis. Stimulates efficient translation and peptide-bond synthesis on native or reconstituted 70S ribosomes in vitro. Probably functions indirectly by altering the affinity of the ribosome for aminoacyl-tRNA, thus increasing their reactivity as acceptors for peptidyl transferase. This is Elongation factor P from Brucella abortus (strain S19).